Reading from the N-terminus, the 499-residue chain is Proline--tRNA ligase (499 aa).

Residues 1–17 (MTKDGGKKDNQGQDKKA) are compositionally biased toward basic and acidic residues. The interval 1–21 (MTKDGGKKDNQGQDKKAQQYG) is disordered.

Belongs to the class-II aminoacyl-tRNA synthetase family. ProS type 3 subfamily. Homodimer.

It localises to the cytoplasm. The catalysed reaction is tRNA(Pro) + L-proline + ATP = L-prolyl-tRNA(Pro) + AMP + diphosphate. Functionally, catalyzes the attachment of proline to tRNA(Pro) in a two-step reaction: proline is first activated by ATP to form Pro-AMP and then transferred to the acceptor end of tRNA(Pro). Can inadvertently accommodate and process cysteine. This Deinococcus radiodurans (strain ATCC 13939 / DSM 20539 / JCM 16871 / CCUG 27074 / LMG 4051 / NBRC 15346 / NCIMB 9279 / VKM B-1422 / R1) protein is Proline--tRNA ligase (proS).